The chain runs to 127 residues: MORF4 family-associated protein 1 (127 aa).

Residues 92-126 (RAAKRCEKAEEKAKEIAKMAEMLVELVRRIEKSES) adopt a coiled-coil conformation.

It belongs to the MORF4 family-associated protein family. In terms of assembly, found in a complex composed of MORF4L1, MRFAP1 and RB1. Interacts via its N-terminus with MORF4L1. Interacts with CSTB and MORF4L2.

It localises to the nucleus. The protein resides in the cytoplasm. Its subcellular location is the perinuclear region. The chain is MORF4 family-associated protein 1 from Homo sapiens (Human).